We begin with the raw amino-acid sequence, 454 residues long: Probable ECA polymerase (454 aa).

A run of 11 helical transmembrane segments spans residues 6-26 (FSGL…LTWF), 37-57 (VFFS…TSIL), 63-83 (VAVV…CFYA), 122-142 (MMAV…FLLF), 157-177 (GVAL…VYFL), 183-203 (AWLF…MIVG), 209-229 (IIIA…ISPG), 230-250 (MLAA…LKRY), 343-363 (LVVM…GLII), 380-400 (YKAA…IVLA), and 411-431 (VIFF…IYWL).

Belongs to the WzyE family. In terms of assembly, probably part of a complex composed of WzxE, WzyE and WzzE.

The protein resides in the cell inner membrane. It functions in the pathway bacterial outer membrane biogenesis; enterobacterial common antigen biosynthesis. Its function is as follows. Probably involved in the polymerization of enterobacterial common antigen (ECA) trisaccharide repeat units. The chain is Probable ECA polymerase from Cronobacter sakazakii (strain ATCC BAA-894) (Enterobacter sakazakii).